The sequence spans 498 residues: SCADDRNPLEECFRETDYEEFLEIARNGLTVTSNPKHVVIVGAGMAGLSAAYVLAGAGHQVTVLEASERVGGRVRTYRKKDWYANLGPMRLPTKHRIVREYIRKFGLQLNEFFQENENAWYFIKNIRKRVREVKNNPGILEYPVKPSEEGKSAAQLYVESLRKVVKELKRTNCKYILDKYDTYSTKEYLLKEGNLSPGAVDMIGDLLNEDSGYYVSFIESLKHDDIFGYEKRFDEIVGGMDQLPTSMYEAIKEKVQVHFNARVIEIQQNDRETKVTYQTSANEMPSVTADYVIVCTTSRAARRIKFEPPLPPKKAHALRSVHYRSGTKIFLTCKRKFWEDDGIRGGKSTTDLPSRFIYYPNHNFTSGVGVIIAYGIGDDANFFQALDFKDCADIVINDLSLIHQLPKEDIQTFCRPSMIQRWSLDKYAMGGITTFTPYQFQHFSEALTAPFKRIYFAGEYTAQFHGWIDSTIKSGLTAARDVNRASENPSGIHLSNDN.

Residues 1–2 form the signal peptide; it reads SC. Cysteines 12 and 173 form a disulfide. FAD-binding positions include 45 to 46, 65 to 66, arginine 73, and 87 to 90; these read MA, EA, and GPMR. Positions 90 and 223 each coordinate substrate. Position 263 (valine 263) interacts with FAD. An intrachain disulfide couples cysteine 333 to cysteine 414. N-linked (GlcNAc...) asparagine glycosylation is present at asparagine 363. Tyrosine 374 is a substrate binding site. Residues glutamate 459 and 466–471 contribute to the FAD site; that span reads GWIDST. 466–467 contacts substrate; sequence GW.

The protein belongs to the flavin monoamine oxidase family. FIG1 subfamily. Monomer. This is in contrast with most of its orthologs, that are non-covalently linked homodimers. FAD serves as cofactor. In terms of tissue distribution, expressed by the venom gland.

The protein localises to the secreted. The enzyme catalyses an L-alpha-amino acid + O2 + H2O = a 2-oxocarboxylate + H2O2 + NH4(+). It catalyses the reaction L-leucine + O2 + H2O = 4-methyl-2-oxopentanoate + H2O2 + NH4(+). Its function is as follows. Catalyzes an oxidative deamination of predominantly hydrophobic and aromatic L-amino acids, thus producing hydrogen peroxide that may contribute to the diverse toxic effects of this enzyme. Shows activity on L-Leu. Damages cell membranes of the Gram-positive bacteria S.aureus (MIC=8 ug/ml and MBC=16 ug/ml) and the Gram-negative bacteria A.baumannii (MIC=16 ug/ml and MBC=32 ug/ml). This antimicrobial activity is dependent on the production of hydrogen peroxyde, since it is inhibited by catalase, a hydrogen peroxyde scavenger. In Crotalus durissus cumanensis (South American rattlesnake), this protein is L-amino acid oxidase Cdc18.